We begin with the raw amino-acid sequence, 161 residues long: Serine-protein kinase RsbW (161 aa).

Belongs to the anti-sigma-factor family.

It catalyses the reaction L-seryl-[protein] + ATP = O-phospho-L-seryl-[protein] + ADP + H(+). The catalysed reaction is L-threonyl-[protein] + ATP = O-phospho-L-threonyl-[protein] + ADP + H(+). Negative regulator of sigma-B activity. Phosphorylates and inactivates its specific antagonist protein, RsbV. Upon phosphorylation of RsbV, RsbW is released and binds to sigma-B, thereby blocking its ability to form an RNA polymerase holoenzyme (E-sigma-B). In Bacillus licheniformis (strain ATCC 14580 / DSM 13 / JCM 2505 / CCUG 7422 / NBRC 12200 / NCIMB 9375 / NCTC 10341 / NRRL NRS-1264 / Gibson 46), this protein is Serine-protein kinase RsbW.